The primary structure comprises 828 residues: Glycerol-3-phosphate acyltransferase (828 aa).

The HXXXXD motif motif lies at 310-315 (HRSHID).

It belongs to the GPAT/DAPAT family.

Its subcellular location is the cell inner membrane. The catalysed reaction is sn-glycerol 3-phosphate + an acyl-CoA = a 1-acyl-sn-glycero-3-phosphate + CoA. It functions in the pathway phospholipid metabolism; CDP-diacylglycerol biosynthesis; CDP-diacylglycerol from sn-glycerol 3-phosphate: step 1/3. This is Glycerol-3-phosphate acyltransferase from Pseudomonas putida (strain ATCC 47054 / DSM 6125 / CFBP 8728 / NCIMB 11950 / KT2440).